We begin with the raw amino-acid sequence, 385 residues long: Probable endopeptidase MT2245 (385 aa).

Residues 235–257 are compositionally biased toward pro residues; that stretch reads AALPPGAPPGDGPAPGVAPPPGG. The interval 235-268 is disordered; sequence AALPPGAPPGDGPAPGVAPPPGGMPGLPFVQPDG. A NlpC/P60 domain is found at 270-385; sequence GGDRTAVVQA…SGPIYDARRY (116 aa). Residue C300 is the Nucleophile of the active site. Residue H348 is the Proton acceptor of the active site. The active site involves H360.

Belongs to the peptidase C40 family.

This is Probable endopeptidase MT2245 from Mycobacterium tuberculosis (strain CDC 1551 / Oshkosh).